Here is a 201-residue protein sequence, read N- to C-terminus: Probable thymidylate kinase (201 aa).

Residue 10-17 (GIDGSGKS) coordinates ATP.

This sequence belongs to the thymidylate kinase family.

The catalysed reaction is dTMP + ATP = dTDP + ADP. This chain is Probable thymidylate kinase, found in Methanococcoides burtonii (strain DSM 6242 / NBRC 107633 / OCM 468 / ACE-M).